Reading from the N-terminus, the 539-residue chain is MYLSRFLSIHALWVTVSSVMQPYLFVWGHYDVCKSLIYTEEGKVWDYTACQPESTDMTKYLKVKLDPPDITCGDPPESFCAMGNPYMCNNECDASTPELAHPPELMFDFEGRHPSTFWQSATWKEYPKPLQVNITLSWSKTIELTDNIVITFESGRPDQMILEKSLDYGRTWQPYQYYATDCLHAFHMDPKSVKDLSQHTVLEIICTEEYSTGYSTNSKIIHFEIKDRFAFFAGPRLRNMASLYGQLDTTKKLRDFFTVTDLRIRLLRPAVGEIFVDELHLARYFYAISDIKVRGRCKCNLHATSCLYDNSKLTCECEHNTTGPDCGKCKKNYQGRPWSPGSYLPIPKGTANTCIPSISSIGNCECFGHSNRCSYIDLLNTVICVSCKHNTRGQHCELCRLGYFRNASAQLDDENVCIECYCNPLGSIHDRCNGSGFCECKTGTTGPKCDECLPGNSWYYGCQPNVCDNELLHCQNGGTCQNNVRCACPDAYTGILCEKLRCEEAGSCGSESGQGAPPRGSPALLLLTMLLGTAGPLVF.

The N-terminal stretch at 1–18 is a signal peptide; sequence MYLSRFLSIHALWVTVSS. Intrachain disulfides connect cysteine 33-cysteine 50, cysteine 72-cysteine 92, and cysteine 80-cysteine 88. In terms of domain architecture, Laminin N-terminal spans 46–296; the sequence is DYTACQPEST…AISDIKVRGR (251 aa). The tract at residues 80 to 91 is NGL discriminant loop I; sequence CAMGNPYMCNNE. N-linked (GlcNAc...) asparagine glycosylation occurs at asparagine 133. A disulfide bond links cysteine 182 and cysteine 206. Residues 208–214 are NGL discriminant loop II; it reads EEYSTGY. The interval 273-275 is NGL discriminant loop III; sequence EIF. 13 disulfide bridges follow: cysteine 297–cysteine 306, cysteine 299–cysteine 315, cysteine 317–cysteine 326, cysteine 329–cysteine 354, cysteine 364–cysteine 373, cysteine 366–cysteine 384, cysteine 387–cysteine 396, cysteine 399–cysteine 417, cysteine 420–cysteine 432, cysteine 422–cysteine 438, cysteine 440–cysteine 449, cysteine 452–cysteine 462, and cysteine 488–cysteine 497. 3 Laminin EGF-like domains span residues 297–356, 364–419, and 420–469; these read CKCN…TCIP, CECF…VCIE, and CYCN…VCDN. A glycan (N-linked (GlcNAc...) asparagine) is linked at asparagine 320. The N-linked (GlcNAc...) asparagine glycan is linked to asparagine 406. An N-linked (GlcNAc...) asparagine glycan is attached at asparagine 433. Serine 510 is lipidated: GPI-anchor amidated serine. Residues 511–539 constitute a propeptide, removed in mature form; the sequence is ESGQGAPPRGSPALLLLTMLLGTAGPLVF.

In terms of processing, N-glycosylated. In terms of tissue distribution, expression is restricted primarily to neurons of the CNS, particularly in the dorsal thalamus, olfactory bulb and inferior colliculus. Isoform 1A and isoform 1D are the major products in adult brain.

Its subcellular location is the cell membrane. Involved in controlling patterning and neuronal circuit formation at the laminar, cellular, subcellular and synaptic levels. Promotes neurite outgrowth of both axons and dendrites. In Mus musculus (Mouse), this protein is Netrin-G1 (Ntng1).